A 90-amino-acid chain; its full sequence is PIK3R3 upstream open reading frame protein (90 aa).

A disordered region spans residues 1-63; sequence MGPSQLVRAP…PASEATNISD (63 aa). The segment covering 27 to 46 has biased composition (basic residues); that stretch reads PRRRCPSMFKCSRRTYRQKP. The segment covering 50-63 has biased composition (polar residues); that stretch reads TATNPASEATNISD.

The polypeptide is PIK3R3 upstream open reading frame protein (Mus musculus (Mouse)).